A 172-amino-acid chain; its full sequence is Translation initiation factor IF-3 (172 aa).

Belongs to the IF-3 family. Monomer.

The protein localises to the cytoplasm. Functionally, IF-3 binds to the 30S ribosomal subunit and shifts the equilibrium between 70S ribosomes and their 50S and 30S subunits in favor of the free subunits, thus enhancing the availability of 30S subunits on which protein synthesis initiation begins. This chain is Translation initiation factor IF-3, found in Lactobacillus johnsonii (strain CNCM I-12250 / La1 / NCC 533).